Reading from the N-terminus, the 202-residue chain is Pycsar effector protein PtPycTM (202 aa).

3 helical membrane passes run 60–80 (GVVL…AADI), 85–105 (LVIL…AVLA), and 181–201 (ILVG…VALG).

Its subcellular location is the cell membrane. Functionally, pycsar (pyrimidine cyclase system for antiphage resistance) provides immunity against bacteriophage. The pyrimidine cyclase (PycC) synthesizes cyclic nucleotides in response to infection; these serve as specific second messenger signals. The signals activate the adjacent effector, leading to bacterial cell death and abortive phage infection. A clade D Pycsar system. The effector gene of a two-gene Pycsar system. Expression of this and adjacent uridylate cyclase PtPycC (AC A0A4V2JTK3) probably confers resistance to bacteriophage. The genes are probably only expressed in response to bacteriophage infection. Probably only responds to cUMP (produced by its cognate NTP cyclase), acts by impairing membrane integrity. The polypeptide is Pycsar effector protein PtPycTM (Propioniciclava tarda).